The sequence spans 290 residues: Cell division protein ZipA (290 aa).

A topological domain (periplasmic) is located at residue methionine 1. The chain crosses the membrane as a helical span at residues 2-22 (DIGLREWLIVIGLIVIAGILF). At 23 to 290 (DGWRRMRGGK…HERRSLMQKR (268 aa)) the chain is on the cytoplasmic side. The disordered stretch occupies residues 66-143 (REPSFDEQDL…REKAPSVAAA (78 aa)). Over residues 81 to 99 (REGKERKGGKRQDEPRQGD) the composition is skewed to basic and acidic residues. The segment covering 100–114 (LDLDEGMALEADPSD) has biased composition (acidic residues).

This sequence belongs to the ZipA family. In terms of assembly, interacts with FtsZ via their C-terminal domains.

It localises to the cell inner membrane. Its function is as follows. Essential cell division protein that stabilizes the FtsZ protofilaments by cross-linking them and that serves as a cytoplasmic membrane anchor for the Z ring. Also required for the recruitment to the septal ring of downstream cell division proteins. The sequence is that of Cell division protein ZipA from Pseudomonas paraeruginosa (strain DSM 24068 / PA7) (Pseudomonas aeruginosa (strain PA7)).